Consider the following 358-residue polypeptide: MIIIFVHEAGHYLIGRWCGIKASVFSLGFGPQIVGYTDKRGTQWRLALIPLGGYVKFIGDEEGLHGTSSQSLPIVDGSFGSAHAWKKAATVFAGPLFNVLFTVVILTFFFFTYGRVAIEPVVGSFVKDSPAVQAGLQLGDRFIEMDGQQVESFEDLMNYVTFHGGDPIEFKMERSGQVFTTVITPKVVERDDGFGNRVRSGLMGVGVPVDPDNPARLDPAYVKHIRYSFGRALREASKRATFIVTQTVFFMGRLLGGKEDHCRLSGPSKTVKIAWQVSETGFLSLLNFTAFLSIGVGLINLFPIPPLDGGYLLFHVVEIITGRPISAKIREIIFRLGLCFVLLFMFFALFNDYFCWFS.

His7 lines the Zn(2+) pocket. The active site involves Glu8. His11 provides a ligand contact to Zn(2+). Transmembrane regions (helical) follow at residues 89 to 111 (ATVF…FFFF), 282 to 304 (FLSL…LFPI), and 332 to 354 (IIFR…NDYF). The PDZ domain maps to 102-177 (TVVILTFFFF…IEFKMERSGQ (76 aa)).

Belongs to the peptidase M50B family. Zn(2+) is required as a cofactor.

Its subcellular location is the cell inner membrane. This chain is Putative zinc metalloprotease BH06270, found in Bartonella henselae (strain ATCC 49882 / DSM 28221 / CCUG 30454 / Houston 1) (Rochalimaea henselae).